A 523-amino-acid polypeptide reads, in one-letter code: Type 2 DNA topoisomerase 6 subunit B (523 aa).

ATP contacts are provided by residues Asn-48, Asp-80, 101-102 (SK), 110-117 (GQQGLGCS), and Lys-436.

It belongs to the TOP6B family. In terms of assembly, homodimer. Heterotetramer of two Top6A and two Top6B chains.

The catalysed reaction is ATP-dependent breakage, passage and rejoining of double-stranded DNA.. Relaxes both positive and negative superturns and exhibits a strong decatenase activity. This chain is Type 2 DNA topoisomerase 6 subunit B, found in Methanothermobacter thermautotrophicus (strain ATCC 29096 / DSM 1053 / JCM 10044 / NBRC 100330 / Delta H) (Methanobacterium thermoautotrophicum).